A 495-amino-acid chain; its full sequence is MALQQHEPAPFAPQSSLSFTQGFLLGQLSVVLLIGAFIKFFIFGEAPPPPSRGMSNRTTHRRYSSVYSPPQDSQKSLREKPSTSNVLRPVPSTSTNTRSILRKTYYSAIPTNPTSKHGRHRMHHSSHQPESLDWFNVLIAQTIAQYRETAYSLKDSPTSSILSSLTAAMNNPEKKPSFIDKIKVTDISLGEEFPIFSNCRIIAVDDPVSDGGRLQALLDVDLSDDNLSIAVETSMLLNYPKPRSAIIPIALSVSVVRFSGTLCISLIPASTEPPEPLQTPAGSPAPPTSDPRDNAGNRPPGPGEHTASQDELPPKSSPKSNVAFSFLPDYRLDLSVRSLIGSRSRLQDVPKIAQLVEARVHAWFEERVVEPRVQVVGLPDLWPRMGRTGVRPGEDSDAGSTAPPRSAGSTESSGPPRFSDDHGREPEGLRFRGALDSRLGLGAGSRTNSFNVDMGGLRSSSMTRQQSGGARSDHFEMPGAMPAGTPVGTPGIPDN.

Residues 1-22 (MALQQHEPAPFAPQSSLSFTQG) lie on the Lumenal side of the membrane. The chain crosses the membrane as a helical span at residues 23–43 (FLLGQLSVVLLIGAFIKFFIF). Residues 44–495 (GEAPPPPSRG…PVGTPGIPDN (452 aa)) lie on the Cytoplasmic side of the membrane. 4 disordered regions span residues 63–94 (YSSV…PSTS), 269–320 (ASTE…SPKS), 382–428 (WPRM…EPEG), and 440–495 (GLGA…IPDN). Polar residues-rich tracts occupy residues 65 to 74 (SVYSPPQDSQ) and 82 to 94 (STSN…PSTS). An SMP-LTD domain is found at 128–379 (QPESLDWFNV…EPRVQVVGLP (252 aa)). Over residues 271–289 (TEPPEPLQTPAGSPAPPTS) the composition is skewed to pro residues. Over residues 418 to 428 (FSDDHGREPEG) the composition is skewed to basic and acidic residues. Residues 458–469 (RSSSMTRQQSGG) are compositionally biased toward polar residues.

It belongs to the MMM1 family. In terms of assembly, homodimer. Component of the ER-mitochondria encounter structure (ERMES) or MDM complex, composed of mmm1, mdm10, mdm12 and mdm34. An MMM1 homodimer associates with one molecule of mdm12 on each side in a pairwise head-to-tail manner, and the SMP-LTD domains of mmm1 and mdm12 generate a continuous hydrophobic tunnel for phospholipid trafficking.

It is found in the endoplasmic reticulum membrane. In terms of biological role, component of the ERMES/MDM complex, which serves as a molecular tether to connect the endoplasmic reticulum (ER) and mitochondria. Components of this complex are involved in the control of mitochondrial shape and protein biogenesis, and function in nonvesicular lipid trafficking between the ER and mitochondria. The mdm12-mmm1 subcomplex functions in the major beta-barrel assembly pathway that is responsible for biogenesis of all outer membrane beta-barrel proteins, and acts in a late step after the SAM complex. The mdm10-mdm12-mmm1 subcomplex further acts in the TOM40-specific pathway after the action of the mdm12-mmm1 complex. Essential for establishing and maintaining the structure of mitochondria and maintenance of mtDNA nucleoids. In Penicillium rubens (strain ATCC 28089 / DSM 1075 / NRRL 1951 / Wisconsin 54-1255) (Penicillium chrysogenum), this protein is Maintenance of mitochondrial morphology protein 1.